A 161-amino-acid polypeptide reads, in one-letter code: S-ribosylhomocysteine lyase (161 aa).

Fe cation is bound by residues H57, H61, and C127.

Belongs to the LuxS family. In terms of assembly, homodimer. Fe cation is required as a cofactor.

It catalyses the reaction S-(5-deoxy-D-ribos-5-yl)-L-homocysteine = (S)-4,5-dihydroxypentane-2,3-dione + L-homocysteine. Its function is as follows. Involved in the synthesis of autoinducer 2 (AI-2) which is secreted by bacteria and is used to communicate both the cell density and the metabolic potential of the environment. The regulation of gene expression in response to changes in cell density is called quorum sensing. Catalyzes the transformation of S-ribosylhomocysteine (RHC) to homocysteine (HC) and 4,5-dihydroxy-2,3-pentadione (DPD). This is S-ribosylhomocysteine lyase from Streptococcus equi subsp. equi (strain 4047).